Reading from the N-terminus, the 382-residue chain is Histidinol-phosphate aminotransferase (382 aa).

Position 215 is an N6-(pyridoxal phosphate)lysine (Lys-215). The tract at residues 363–382 (NIDNQSKTHSQTSSIRKGTI) is disordered.

It belongs to the class-II pyridoxal-phosphate-dependent aminotransferase family. Histidinol-phosphate aminotransferase subfamily. As to quaternary structure, homodimer. Pyridoxal 5'-phosphate is required as a cofactor.

It carries out the reaction L-histidinol phosphate + 2-oxoglutarate = 3-(imidazol-4-yl)-2-oxopropyl phosphate + L-glutamate. It participates in amino-acid biosynthesis; L-histidine biosynthesis; L-histidine from 5-phospho-alpha-D-ribose 1-diphosphate: step 7/9. The protein is Histidinol-phosphate aminotransferase of Yersinia pseudotuberculosis serotype O:1b (strain IP 31758).